The chain runs to 215 residues: Ribosomal RNA small subunit methyltransferase G (215 aa).

S-adenosyl-L-methionine contacts are provided by residues Gly77, Phe82, 130–131, and Arg146; that span reads IE.

The protein belongs to the methyltransferase superfamily. RNA methyltransferase RsmG family.

It is found in the cytoplasm. It carries out the reaction guanosine(527) in 16S rRNA + S-adenosyl-L-methionine = N(7)-methylguanosine(527) in 16S rRNA + S-adenosyl-L-homocysteine. Functionally, specifically methylates the N7 position of guanine in position 527 of 16S rRNA. This is Ribosomal RNA small subunit methyltransferase G from Bartonella henselae (strain ATCC 49882 / DSM 28221 / CCUG 30454 / Houston 1) (Rochalimaea henselae).